Reading from the N-terminus, the 129-residue chain is Phosphoribosyl-AMP cyclohydrolase (129 aa).

Aspartate 77 is a Mg(2+) binding site. Cysteine 78 is a binding site for Zn(2+). 2 residues coordinate Mg(2+): aspartate 79 and aspartate 81. Zn(2+) contacts are provided by cysteine 94 and cysteine 101.

This sequence belongs to the PRA-CH family. Homodimer. Requires Mg(2+) as cofactor. Zn(2+) is required as a cofactor.

The protein localises to the cytoplasm. The enzyme catalyses 1-(5-phospho-beta-D-ribosyl)-5'-AMP + H2O = 1-(5-phospho-beta-D-ribosyl)-5-[(5-phospho-beta-D-ribosylamino)methylideneamino]imidazole-4-carboxamide. It functions in the pathway amino-acid biosynthesis; L-histidine biosynthesis; L-histidine from 5-phospho-alpha-D-ribose 1-diphosphate: step 3/9. Catalyzes the hydrolysis of the adenine ring of phosphoribosyl-AMP. The chain is Phosphoribosyl-AMP cyclohydrolase from Pelotomaculum thermopropionicum (strain DSM 13744 / JCM 10971 / SI).